A 418-amino-acid chain; its full sequence is MLSKKLTVDKIPHMIKNKRVLVRVDFNVPIKDGKVADPTRIVSTLDTINFLKENGAKSIVLMSHLGRPKGVRQEQFSLAPVVPALEDIIGQKVNFLNDCIGTEVEGEVANTKDGNILLLENLRFYLEEEGKGVINGEKVKADPTKVESFRSQLTRLGDLYVNDAFGTCHRAHSSMVGVNVDTRAAGFLLKKELDYFSKVLEDPKRPLTVILGGAKVADKIQLINNLLDLADEMIIGGGMAFTFNKVLNNTPIGASLYDEEGAKTVHGIMEKAKEKGVKIHIPSDFVCAESFAEDAKFAYKLKMKESQDGWLGLDIGDKTIRSFDEVIRRSNTLFWNGPSGVFEWKNFAKGSHAMLQAVTESTKNGTVSVCGGGDTLNLLKQVDGAKENISHVSTGGGASLELVEGKELPGIKALSDIN.

(2R)-3-phosphoglycerate-binding residues include V24, D25, F26, N27, R40, S63, H64, G66, R67, L122, R123, H169, and R170. Position 213 (G213) interacts with ADP. Position 213 (G213) interacts with CDP. Residues A214 and K215 each coordinate AMP. A214 provides a ligand contact to ATP. A214 lines the Mg(2+) pocket. Mg(2+) contacts are provided by A217 and D218. D218 serves as a coordination point for CDP. K219 is an AMP binding site. K219 contacts ATP. Residue G237 participates in ADP binding. G237 is a CDP binding site. The AMP site is built by G238 and G312. ATP contacts are provided by G238 and G312. Positions 337 and 342 each coordinate CDP. Residue F342 coordinates ADP. E343 serves as a coordination point for AMP. Positions 343, 374, and 375 each coordinate ATP. A Mg(2+)-binding site is contributed by D374.

Belongs to the phosphoglycerate kinase family. As to quaternary structure, monomer. Requires Mg(2+) as cofactor.

The catalysed reaction is (2R)-3-phosphoglycerate + ATP = (2R)-3-phospho-glyceroyl phosphate + ADP. It functions in the pathway carbohydrate degradation; glycolysis; pyruvate from D-glyceraldehyde 3-phosphate: step 2/5. This is Phosphoglycerate kinase (PGK) from Euplotes crassus.